The primary structure comprises 130 residues: Probable 4-amino-4-deoxy-L-arabinose-phosphoundecaprenol flippase subunit ArnF (130 aa).

The Cytoplasmic portion of the chain corresponds to methionine 1–tyrosine 4. The helical transmembrane segment at alanine 5 to methionine 25 threads the bilayer. Residues alanine 26 to proline 47 lie on the Periplasmic side of the membrane. Residues leucine 48–alanine 68 traverse the membrane as a helical segment. The Cytoplasmic segment spans residues leucine 69 to alanine 77. Residues tyrosine 78–phenylalanine 98 traverse the membrane as a helical segment. Asparagine 99 is a topological domain (periplasmic). Residues glutamate 100–isoleucine 120 form a helical membrane-spanning segment. The Cytoplasmic portion of the chain corresponds to asparagine 121–glutamine 130.

Belongs to the ArnF family. Heterodimer of ArnE and ArnF.

It is found in the cell inner membrane. It participates in bacterial outer membrane biogenesis; lipopolysaccharide biosynthesis. Functionally, translocates 4-amino-4-deoxy-L-arabinose-phosphoundecaprenol (alpha-L-Ara4N-phosphoundecaprenol) from the cytoplasmic to the periplasmic side of the inner membrane. The sequence is that of Probable 4-amino-4-deoxy-L-arabinose-phosphoundecaprenol flippase subunit ArnF from Serratia proteamaculans (strain 568).